A 266-amino-acid polypeptide reads, in one-letter code: Undecaprenyl-diphosphatase 3 (266 aa).

A run of 8 helical transmembrane segments spans residues 4-24 (IEAF…FLPI), 43-63 (SGRA…CWLY), 86-106 (FSVL…VDFI), 109-129 (VLFS…IIFW), 145-165 (ITFK…IPGT), 186-206 (TEFS…YDLL), 219-239 (NIGL…KALV), and 246-266 (TLRV…FVML).

It belongs to the UppP family.

It localises to the cell inner membrane. It catalyses the reaction di-trans,octa-cis-undecaprenyl diphosphate + H2O = di-trans,octa-cis-undecaprenyl phosphate + phosphate + H(+). In terms of biological role, catalyzes the dephosphorylation of undecaprenyl diphosphate (UPP). Confers resistance to bacitracin. The chain is Undecaprenyl-diphosphatase 3 from Acinetobacter baylyi (strain ATCC 33305 / BD413 / ADP1).